A 350-amino-acid chain; its full sequence is MIKKAIAKVVERIDLTEAEMIEVMDQIMSGGATPAQIAAFITALRMKGETVEEITGAARVMRDRATPIRVGKGVLDIDRDDINIDQETILDVVGTGGDGTNTFNISTTVSFVVASCGVKVAKHGNRAVSSACGSADVLESLGVNLDVTPETVEQAIAKIGIGFLFAPALHGAMKHAIGPRKEIGIRTIFNILGPLTNPAGADCQVLGVYREELVEPLARVLHKLGCRRGFVVHGMDGMDEITLTRETRIAEVTRDGVSVRTITPEEFGFASCPAGELRGGDAAGNARIVRGILEGATGPRRDVVLLNAAFGLVAAGKAVDPAEGVRIAAEAIDSGRALAKLEELITLTNE.

5-phospho-alpha-D-ribose 1-diphosphate-binding positions include glycine 94, 97 to 98 (GD), threonine 102, 104 to 107 (NIST), 122 to 130 (KHGNRAVSS), and serine 134. Glycine 94 lines the anthranilate pocket. Serine 106 provides a ligand contact to Mg(2+). Asparagine 125 serves as a coordination point for anthranilate. Residue arginine 180 participates in anthranilate binding. Mg(2+) contacts are provided by aspartate 239 and glutamate 240.

This sequence belongs to the anthranilate phosphoribosyltransferase family. Homodimer. It depends on Mg(2+) as a cofactor.

The catalysed reaction is N-(5-phospho-beta-D-ribosyl)anthranilate + diphosphate = 5-phospho-alpha-D-ribose 1-diphosphate + anthranilate. The protein operates within amino-acid biosynthesis; L-tryptophan biosynthesis; L-tryptophan from chorismate: step 2/5. Its function is as follows. Catalyzes the transfer of the phosphoribosyl group of 5-phosphorylribose-1-pyrophosphate (PRPP) to anthranilate to yield N-(5'-phosphoribosyl)-anthranilate (PRA). This is Anthranilate phosphoribosyltransferase from Geobacter sulfurreducens (strain ATCC 51573 / DSM 12127 / PCA).